The chain runs to 166 residues: MSEQQAFRDAMSRLGAAVNIVTTDGPAGMAGFTASAVCSVTDSPPTLLVCLNRNASVWPVFQANGQLCVNTLAAGHEALSGLFGGKTPMEERFAAARWRRGVTGSPQLDGAVVSFDCRVEQVVPVSTHDVLLCRVLEISRNDDTHGLVWFDRRYHALSRPVCGLAS.

The protein belongs to the non-flavoprotein flavin reductase family. RutF subfamily.

It carries out the reaction FMNH2 + NAD(+) = FMN + NADH + 2 H(+). In terms of biological role, catalyzes the reduction of FMN to FMNH2 which is used to reduce pyrimidine by RutA via the Rut pathway. The chain is FMN reductase (NADH) RutF from Cronobacter sakazakii (strain ATCC BAA-894) (Enterobacter sakazakii).